The following is a 956-amino-acid chain: RNA-silencing factor ers1 (956 aa).

The protein resides in the cytoplasm. It is found in the cytoskeleton. It localises to the microtubule organizing center. Its subcellular location is the spindle pole body. Its function is as follows. Involved in RNAi-dependent heterochromatin formation and centromeric silencing. Required for the conversion of centromeric pre-small interfering RNA transcripts into small interfering RNAs, histone H3 'Lys9' methylation, and the recruitment of the RITS complex to centromeric sequences. The chain is RNA-silencing factor ers1 (ers1) from Schizosaccharomyces pombe (strain 972 / ATCC 24843) (Fission yeast).